The primary structure comprises 355 residues: tRNA N6-adenosine threonylcarbamoyltransferase (355 aa).

Fe cation contacts are provided by H113 and H117. Substrate is bound by residues 135–139, D168, G181, and N279; that span reads LASGG. Fe cation is bound at residue D307.

Belongs to the KAE1 / TsaD family. Requires Fe(2+) as cofactor.

The protein resides in the cytoplasm. The catalysed reaction is L-threonylcarbamoyladenylate + adenosine(37) in tRNA = N(6)-L-threonylcarbamoyladenosine(37) in tRNA + AMP + H(+). Its function is as follows. Required for the formation of a threonylcarbamoyl group on adenosine at position 37 (t(6)A37) in tRNAs that read codons beginning with adenine. Is involved in the transfer of the threonylcarbamoyl moiety of threonylcarbamoyl-AMP (TC-AMP) to the N6 group of A37, together with TsaE and TsaB. TsaD likely plays a direct catalytic role in this reaction. The protein is tRNA N6-adenosine threonylcarbamoyltransferase of Bradyrhizobium sp. (strain BTAi1 / ATCC BAA-1182).